Reading from the N-terminus, the 445-residue chain is Succinate--CoA ligase [ADP-forming] subunit beta, mitochondrial (445 aa).

The transit peptide at 1–17 (MLSNIVKKTIQSSKNLK) directs the protein to the mitochondrion. In terms of domain architecture, ATP-grasp spans 43–270 (QKMMKSYGIN…DNAAFRHPDI (228 aa)). Residues K80 and 87 to 89 (GRG) contribute to the ATP site. Mg(2+) is bound by residues N240 and D254. Residues N305 and 362 to 364 (GIM) contribute to the substrate site.

It belongs to the succinate/malate CoA ligase beta subunit family. ATP-specific subunit beta subfamily. In terms of assembly, heterodimer of an alpha and a beta subunit. The beta subunit determines specificity for ATP. Mg(2+) serves as cofactor.

The protein localises to the mitochondrion. The enzyme catalyses succinate + ATP + CoA = succinyl-CoA + ADP + phosphate. Its pathway is carbohydrate metabolism; tricarboxylic acid cycle; succinate from succinyl-CoA (ligase route): step 1/1. ATP-specific succinyl-CoA synthetase functions in the citric acid cycle (TCA), coupling the hydrolysis of succinyl-CoA to the synthesis of ATP and thus represents the only step of substrate-level phosphorylation in the TCA. The beta subunit provides nucleotide specificity of the enzyme and binds the substrate succinate, while the binding sites for coenzyme A and phosphate are found in the alpha subunit. This Dictyostelium discoideum (Social amoeba) protein is Succinate--CoA ligase [ADP-forming] subunit beta, mitochondrial (scsC).